The chain runs to 96 residues: Co-chaperonin GroES (96 aa).

This sequence belongs to the GroES chaperonin family. As to quaternary structure, heptamer of 7 subunits arranged in a ring. Interacts with the chaperonin GroEL.

The protein resides in the cytoplasm. Together with the chaperonin GroEL, plays an essential role in assisting protein folding. The GroEL-GroES system forms a nano-cage that allows encapsulation of the non-native substrate proteins and provides a physical environment optimized to promote and accelerate protein folding. GroES binds to the apical surface of the GroEL ring, thereby capping the opening of the GroEL channel. This chain is Co-chaperonin GroES, found in Actinobacillus succinogenes (strain ATCC 55618 / DSM 22257 / CCUG 43843 / 130Z).